Consider the following 495-residue polypeptide: Pleckstrin homology domain-containing family O member 2 (495 aa).

Residues Thr18–Asn120 form the PH domain. A phosphoserine mark is found at Ser165 and Ser168. A disordered region spans residues Leu171–Lys411. Pro residues predominate over residues Gln198–Gly213. A Phosphothreonine modification is found at Thr233. Residues Asp235–Glu244 show a composition bias toward polar residues. Phosphoserine is present on residues Ser236, Ser238, Ser239, Ser274, and Ser292. Thr296 bears the Phosphothreonine mark. Over residues Ser324–Ser335 the composition is skewed to low complexity. A compositionally biased stretch (polar residues) spans Glu336 to Val350. Ser395 bears the Phosphoserine mark. Positions Leu399 to Lys411 are enriched in basic and acidic residues. Positions Cys444 to Leu469 form a coiled coil.

This is Pleckstrin homology domain-containing family O member 2 (Plekho2) from Mus musculus (Mouse).